The primary structure comprises 728 residues: MDNPTDTAGKCPVAHGNKPRGPSNRDWWPNQLNVQILHHNSGRADPLGKDFDYAEEFKKLDLDALKKDLHALMTDSQDWWPADFGHYGGLFIRMAWHSAGTYRITDGRGGAGQGQQRFAPLNSWPDNANLDKARRLLWPIKQKYGNRISWADLLILTGNVALESMGFKTFGFAGGRADVWEPEELYWGPEGTWLGDERYSGERQLAEPLGAVQMGLIYVNPEGPNGNPDPVAAARDIRETFARMAMNDEETVALIAGGHTFGKTHGAGDPSFIGAEPEGGAIEDQGLGWKSSFGTGVGKDAITAGLEVTWSQTPTKWSNYFFENLFAYEWELTKSPAGAHQWRAKNAEASIPDAYEPGKKHVPTMLTTDLSLRFDPIYEKISRRFLENPDQFADAFARAWFKLTHRDMGPKVRYLGPEVPAEDLIWQDVIPAVDHPLVDDKDIAELKAKVLATGLTVQELVSTAWASASTFRGSDKRGGANGARIRLAPQKDWEANQPAQLAKVLGVLEGIQKDFNAAQTGAKKISLADLIVLAGAAGVEKAAAAGGNAVSVPLTPGRMDASEAQTDAHSFAPLEPRIDGFRNYVNGKRLQFMKPEEALVDRAQLLTLTGPEMTVLVGGLRVLKAGNPEHGVFTSRPETLTNDFFVNLLDVATQWVPATGKEGVYEGRDRKTGAAKWTGTRVDLIFGSHSQLRAFAEVYGQADAKQKFVKDFVAAWNKVMNADRFDLV.

The disordered stretch occupies residues 1 to 26; the sequence is MDNPTDTAGKCPVAHGNKPRGPSNRD. The segment at residues 96 to 218 is a cross-link (tryptophyl-tyrosyl-methioninium (Trp-Tyr) (with M-244)); sequence WHSAGTYRIT…LGAVQMGLIY (123 aa). His-97 acts as the Proton acceptor in catalysis. A cross-link (tryptophyl-tyrosyl-methioninium (Tyr-Met) (with W-96)) is located at residues 218–244; that stretch reads YVNPEGPNGNPDPVAAARDIRETFARM. His-259 contacts heme b.

This sequence belongs to the peroxidase family. Peroxidase/catalase subfamily. Homodimer or homotetramer. Heme b is required as a cofactor. Formation of the three residue Trp-Tyr-Met cross-link is important for the catalase, but not the peroxidase activity of the enzyme.

It catalyses the reaction H2O2 + AH2 = A + 2 H2O. The catalysed reaction is 2 H2O2 = O2 + 2 H2O. In terms of biological role, bifunctional enzyme with both catalase and broad-spectrum peroxidase activity. Important for stationary phase survival. The sequence is that of Catalase-peroxidase from Rhizobium etli (strain ATCC 51251 / DSM 11541 / JCM 21823 / NBRC 15573 / CFN 42).